A 30-amino-acid polypeptide reads, in one-letter code: L-amino-acid oxidase (30 aa).

Belongs to the flavin monoamine oxidase family. FIG1 subfamily. Monomer. This is in contrast with most of its orthologs, that are non-covalently linked homodimers. FAD is required as a cofactor. In terms of processing, N-glycosylated. Expressed by the venom gland.

It localises to the secreted. The catalysed reaction is an L-alpha-amino acid + O2 + H2O = a 2-oxocarboxylate + H2O2 + NH4(+). It carries out the reaction L-leucine + O2 + H2O = 4-methyl-2-oxopentanoate + H2O2 + NH4(+). The enzyme catalyses L-phenylalanine + O2 + H2O = 3-phenylpyruvate + H2O2 + NH4(+). It catalyses the reaction L-tryptophan + O2 + H2O = indole-3-pyruvate + H2O2 + NH4(+). The catalysed reaction is L-methionine + O2 + H2O = 4-methylsulfanyl-2-oxobutanoate + H2O2 + NH4(+). It carries out the reaction L-2-aminohexanoate + O2 + H2O = 2-oxohexanoate + H2O2 + NH4(+). The enzyme catalyses L-tyrosine + O2 + H2O = 3-(4-hydroxyphenyl)pyruvate + H2O2 + NH4(+). In terms of biological role, catalyzes an oxidative deamination of predominantly hydrophobic and aromatic L-amino acids, thus producing hydrogen peroxide that may contribute to the diverse toxic effects of this enzyme. Is highly active against L-Met, L-Leu, L-norleucine (L-2-aminohexanoate), L-Trp, L-Phe, moderately active against L-Tyr, and no active on L-Gly, L-Ala, L-Val, L-Pro, L-His, L-Lys, L-Arg, L-Asp, L-Asn, L-Gln, L-Glu, L-Ser, and L-Thr. Exhibits diverse biological activities, such as hemorrhage, hemolysis, edema, antibacterial and antiparasitic activities. In addition, this protein induces apoptosis. It also interacts with endothelial cells, and inhibits collagen- and ADP-induced platelet aggregation. L-LAAO family effects on platelets are controversial, since it either induces aggregation or inhibits agonist-induced aggregation. These different effects are probably due to different experimental conditions. This chain is L-amino-acid oxidase, found in Bothrops leucurus (Whitetail lancehead).